Reading from the N-terminus, the 146-residue chain is Hemoglobin subunit beta (146 aa).

At V1 the chain carries N-acetylvaline. Residues H2 to H146 form the Globin domain. The residue at position 12 (T12) is a Phosphothreonine. Position 44 is a phosphoserine (S44). Position 59 is an N6-acetyllysine (K59). H63 lines the heme b pocket. K82 bears the N6-acetyllysine mark. H92 lines the heme b pocket. S-nitrosocysteine is present on C93. N6-acetyllysine is present on K144.

The protein belongs to the globin family. In terms of assembly, heterotetramer of two alpha chains and two beta chains. Red blood cells.

Involved in oxygen transport from the lung to the various peripheral tissues. The polypeptide is Hemoglobin subunit beta (HBB) (Piliocolobus badius (Western red colobus)).